Consider the following 415-residue polypeptide: Thylakoid ADP,ATP carrier protein, chloroplastic (415 aa).

Residues 1 to 61 (MGEEKSLLQF…NFASLSVAIR (61 aa)) constitute a chloroplast transit peptide. 5 helical membrane passes run 106 to 126 (IALL…AFAG), 182 to 207 (LPQV…KLFR), 219 to 239 (LGAG…LDVL), 273 to 293 (GPSL…FDLV), and 309 to 329 (LLTA…LDTI). Solcar repeat units follow at residues 113 to 205 (PKDA…YKKL), 213 to 296 (LSVL…VKKS), and 307 to 387 (SSLL…VKKL). Residue R187 coordinates ADP. ADP is bound at residue R330. The chain crosses the membrane as a helical span at residues 362–388 (GFVPNALKSMPNSSIKLTTFDIVKKLI).

This sequence belongs to the mitochondrial carrier (TC 2.A.29) family. In terms of tissue distribution, highly expressed in developing photosynthetic organs such as leaves, flower buds and green siliques. Also detected in roots, flowers, mature leaves and stems.

It is found in the plastid. The protein resides in the chloroplast thylakoid membrane. Its subcellular location is the chloroplast envelope. With respect to regulation, KM and Vmax values toward ATP only are increased by m-chlorocarbonyl cyanide phenylhydrazone (CCCP). The corresponding values for ADP are not affected. Specifically transports adenine nucleotides. Involved in the uptake of ATP into thylakoids in exchange for lumenal ADP. The protein is Thylakoid ADP,ATP carrier protein, chloroplastic (TAAC) of Arabidopsis thaliana (Mouse-ear cress).